The primary structure comprises 72 residues: Translation initiation factor IF-1 (72 aa).

Residues 1-72 form the S1-like domain; that stretch reads MAKDDVIEVD…DKGRITFRYK (72 aa).

Belongs to the IF-1 family. As to quaternary structure, component of the 30S ribosomal translation pre-initiation complex which assembles on the 30S ribosome in the order IF-2 and IF-3, IF-1 and N-formylmethionyl-tRNA(fMet); mRNA recruitment can occur at any time during PIC assembly.

The protein localises to the cytoplasm. Its function is as follows. One of the essential components for the initiation of protein synthesis. Stabilizes the binding of IF-2 and IF-3 on the 30S subunit to which N-formylmethionyl-tRNA(fMet) subsequently binds. Helps modulate mRNA selection, yielding the 30S pre-initiation complex (PIC). Upon addition of the 50S ribosomal subunit IF-1, IF-2 and IF-3 are released leaving the mature 70S translation initiation complex. The chain is Translation initiation factor IF-1 from Wolinella succinogenes (strain ATCC 29543 / DSM 1740 / CCUG 13145 / JCM 31913 / LMG 7466 / NCTC 11488 / FDC 602W) (Vibrio succinogenes).